Consider the following 328-residue polypeptide: Ferredoxin--NADP reductase (328 aa).

FAD-binding residues include Glu36, Gln44, Tyr49, Val89, Phe123, Asp284, and Thr324.

It belongs to the ferredoxin--NADP reductase type 2 family. As to quaternary structure, homodimer. It depends on FAD as a cofactor.

It catalyses the reaction 2 reduced [2Fe-2S]-[ferredoxin] + NADP(+) + H(+) = 2 oxidized [2Fe-2S]-[ferredoxin] + NADPH. The chain is Ferredoxin--NADP reductase from Lacticaseibacillus paracasei (strain ATCC 334 / BCRC 17002 / CCUG 31169 / CIP 107868 / KCTC 3260 / NRRL B-441) (Lactobacillus paracasei).